The primary structure comprises 252 residues: Imidazole glycerol phosphate synthase subunit HisF (252 aa).

Catalysis depends on residues Asp11 and Asp130.

It belongs to the HisA/HisF family. Heterodimer of HisH and HisF.

The protein localises to the cytoplasm. The catalysed reaction is 5-[(5-phospho-1-deoxy-D-ribulos-1-ylimino)methylamino]-1-(5-phospho-beta-D-ribosyl)imidazole-4-carboxamide + L-glutamine = D-erythro-1-(imidazol-4-yl)glycerol 3-phosphate + 5-amino-1-(5-phospho-beta-D-ribosyl)imidazole-4-carboxamide + L-glutamate + H(+). It participates in amino-acid biosynthesis; L-histidine biosynthesis; L-histidine from 5-phospho-alpha-D-ribose 1-diphosphate: step 5/9. IGPS catalyzes the conversion of PRFAR and glutamine to IGP, AICAR and glutamate. The HisF subunit catalyzes the cyclization activity that produces IGP and AICAR from PRFAR using the ammonia provided by the HisH subunit. The chain is Imidazole glycerol phosphate synthase subunit HisF from Lacticaseibacillus paracasei (strain ATCC 334 / BCRC 17002 / CCUG 31169 / CIP 107868 / KCTC 3260 / NRRL B-441) (Lactobacillus paracasei).